The following is a 1429-amino-acid chain: MDFFDFTKDFRREEAPSGFISSDPSSMATEMFESKPIKREVIGTDYVAEIAAKEKLLMSGQLKAEIPGQYSGGMDDLDSNDDMDDEEISKIRLDEEYYKKYRFNLNRDKNLPIYAKREVIVNAINTHQVVILKGETGCGKTTQVPQYILDEGFKSGQYCNIVVTQPRRIGAISIANRVSQERMWEPDTVCSYQVGLHRKQHLEDTRLLYCTTGVLLNSLIRNKTLTHYTHIVLDEVHERDQDMDFLLIVVRRLLATNSRHVKVILMSATIDTREFCDYFSTKVSVPPVISASHGRKHSIEKFYRDQLGSINWKDDPDDGYQARIPDEAYKAAVKIILVVDNMERQAANQSEQSYDDAKSQGAVLIFLPGIYEIDNMAESLGNMTKEEPSMKLFIVRCFSLMTPDAQRDVFSPPPSGFRKIILATNIAESSITVPDVSYVIDFCLTKVLVTDTATNFSSLRLTWASKANCRQRAGRVGRLRSGRVYRMVHKLFYKTNMTEFGVPEMLRLPLQNSVLKAKLLDIAPPIEMLALALSPPNLSDIQNTILLLKEVGALFPTVDGEYCEVDGDITFWGIIMSRLPLDTRLSRLIILGYVFNLLEEAIVIAAGLSMRGLSTEAGRGRLTSDAYWMNYVFADGSGSDLVAIWRIYRTYENMVANGMHQESAEPWARRYHVSLRALKEMHLLVQELKSRCSQLGMISFNLSSSDMPDDLEKAILLKVIIAGAFYPNYFLRSKKTTLEQERDIFHVISGRDPCRTVYFTNFKPAYMGELYTRRIKDLFQELKIPPESIEVTFQPGSQKVFVTFKSDECDTNCTRLINVPGQVLTEVYKSIRMRLYQSNRTFRVMDHNNALNYVQRHGIGTLKEGHWTPPSRPLNVEMLALPSVYEKNMTGLITHVDHCGKFFFQPKSFARCIQNMSEIINTPMHLQYEIQNAGVLTKGMMVLAKRKGTFERAIIVRPETQNNRQPKFFVRFVDYGNTDLMYIEQLRLMTKELLSQYGDLPPRVFECRLALVQPSTMSNTLSRWSRDAKDMLISASKNNIVEIEIYSLVYNVAAVMVHTRDGLLNDKLVEHNLARRADENFMSRQDHDFRIRKQESARYISGPERQQVNEEYLRSCQMPEDLDLTPPPLDKCNMIVMLKGPYSPLETSMFSTIRVGVWKTVKIDNSSVNAVLLDSDPQDNHDQLVVSHSTVESSNGDVLTARGTTLMPNIHGFGPLMTMLFCPTMQIKCNKDCTKYVSILAGLGFDKETMKPYFEEHDMVMNLDVNLYEDDVRMINQMRYNIDTMFFNFEGEELPSLNMNDRVTIYKELRKLVNRLLSKDRSYIELNASNSDFNWEKEDRIEPQPEPFGKRCIFPMHVIPELLEEDIGRRLYLIDNCKKLYKWRNFEGALDILNCKLCNMSLETTPQLRLHLLTQLHRDREKQIGFKNE.

The region spanning 121–288 is the Helicase ATP-binding domain; that stretch reads VNAINTHQVV…FSTKVSVPPV (168 aa). 134-141 contacts ATP; that stretch reads GETGCGKT. Positions 234–237 match the DEAH box motif; that stretch reads DEVH. Positions 349–521 constitute a Helicase C-terminal domain; the sequence is QSEQSYDDAK…NSVLKAKLLD (173 aa). Residues 933–996 form the Tudor domain; that stretch reads AGVLTKGMMV…RLMTKELLSQ (64 aa).

This sequence belongs to the DEAD box helicase family. DEAH subfamily.

The protein localises to the cytoplasm. It carries out the reaction ATP + H2O = ADP + phosphate + H(+). Its function is as follows. Probable ATP-binding RNA helicase which plays a central role during spermatogenesis and oogenesis by repressing transposable elements and preventing their mobilization, which is essential for the germline integrity. Acts via the piRNA metabolic process, which mediates the repression of transposable elements during meiosis by forming complexes composed of piRNAs and Piwi and govern the methylation and subsequent repression of transposons. Involved in the repression of LTR retrotransposon copia. Also involved in telomere regulation by repressing specialized telomeric retroelements HeT-A, TAHRE, and TART; Drosophila telomeres being maintained by transposition of specialized telomeric retroelements. Involved in telomeric trans-silencing, a repression mechanism by which a transposon or a transgene inserted in subtelomeric heterochromatin has the capacity to repress in trans in the female germline, a homologous transposon, or transgene located in euchromatin. Involved in the repression of testis-expressed Stellate genes by the homologous Su(Ste) repeats. Required for anteroposterior and dorsoventral axis formation during oogenesis. This chain is Probable ATP-dependent RNA helicase spindle-E (spn-E), found in Drosophila ananassae (Fruit fly).